Here is a 451-residue protein sequence, read N- to C-terminus: Trigger factor (451 aa).

The PPIase FKBP-type domain occupies 163 to 248 (GDIIDMEYTV…IKALYANILP (86 aa)).

It belongs to the FKBP-type PPIase family. Tig subfamily.

The protein localises to the cytoplasm. The catalysed reaction is [protein]-peptidylproline (omega=180) = [protein]-peptidylproline (omega=0). In terms of biological role, involved in protein export. Acts as a chaperone by maintaining the newly synthesized protein in an open conformation. Functions as a peptidyl-prolyl cis-trans isomerase. The protein is Trigger factor of Leptospira interrogans serogroup Icterohaemorrhagiae serovar copenhageni (strain Fiocruz L1-130).